The following is a 514-amino-acid chain: F-box-like/WD repeat-containing protein TBL1XR1 (514 aa).

Ser2 is modified (N-acetylserine). The LisH domain maps to 4-36 (SSDEVNFLVYRYLQESGFSHSAFTFGIESHISQ). The F-box-like domain occupies 41-86 (GALVPPAALISIIQKGLQYVEAEVSINEDGTLFDGRPIESLSLIDA). Lys102 is subject to N6-acetyllysine. Ser119 is subject to Phosphoserine. Positions 120–135 (QQGSAKNGENTANGEE) are enriched in low complexity. Residues 120–139 (QQGSAKNGENTANGEENGAH) form a disordered region. 8 WD repeats span residues 167 to 206 (GHESEVFICAWNPVSDLLASGSGDSTARIWNLSENSTSGS), 223 to 262 (PSNKDVTSLDWNSEGTLLATGSYDGFARIWTKDGNLASTL), 264 to 303 (QHKGPIFALKWNKKGNFILSAGVDKTTIIWDAHTGEAKQQ), 306 to 344 (FHSAPALDVDWQSNNTFASCSTDMCIHVCKLGQDRPIKT), 347 to 386 (GHTNEVNAIKWDPTGNLLASCSDDMTLKIWSMKQDNCVHD), 389 to 437 (AHNK…CIHT), 440 to 479 (KHQEPVYSVAFSPDGRYLASGSFDKCVHIWNTQTGALVHS), and 481 to 513 (RGTGGIFEVCWNAAGDKVGASASDGSVCVLDLR). Lys277 is covalently cross-linked (Glycyl lysine isopeptide (Lys-Gly) (interchain with G-Cter in SUMO2)).

It belongs to the WD repeat EBI family. In terms of assembly, component of the N-Cor repressor complex, at least composed of NCOR1, NCOR2, HDAC3, TBL1X, TBL1XR1, CORO2A and GPS2. Probable component of some E3 ubiquitin ligase complex. Interacts with histones H2B and H4. Interacts with MECP2; bridges interaction between MECP2 and NCOR1. Interacts with USP44. In terms of tissue distribution, widely expressed including the pituitary, hypothalamus, white and brown adipose tissue, muscle and liver.

The protein localises to the nucleus. Functionally, F-box-like protein involved in the recruitment of the ubiquitin/19S proteasome complex to nuclear receptor-regulated transcription units. Plays an essential role in transcription activation mediated by nuclear receptors. Probably acts as integral component of the N-Cor corepressor complex that mediates the recruitment of the 19S proteasome complex, leading to the subsequent proteasomal degradation of N-Cor complex, thereby allowing cofactor exchange, and transcription activation. In Homo sapiens (Human), this protein is F-box-like/WD repeat-containing protein TBL1XR1 (TBL1XR1).